The following is a 302-amino-acid chain: Transcription factor bHLH7 (302 aa).

Residues Gln124 to Pro154 form a disordered region. The region spanning Gln150–Leu199 is the bHLH domain.

As to quaternary structure, homodimer. As to expression, expressed constitutively in roots, leaves, stems and flowers.

The protein localises to the nucleus. The sequence is that of Transcription factor bHLH7 (BHLH7) from Arabidopsis thaliana (Mouse-ear cress).